We begin with the raw amino-acid sequence, 320 residues long: 3-ketodihydrosphingosine reductase TSC10 (320 aa).

At 1–254 (MKFTLEDQVV…IIAKSLARGD (254 aa)) the chain is on the cytoplasmic side. An NADP(+)-binding site is contributed by Leu11. NADPH-binding residues include Gly14, Ser16, and Gly18. The short motif at 14–18 (GGSQG) is the GXSXG element. NADP(+) is bound at residue Leu19. NADPH is bound by residues Arg41, Arg45, Asp89, and Leu90. Asp89 is an NADP(+) binding site. The active-site Proton donor is the Ser166. Residues Tyr180, Lys184, and Ser213 each coordinate NADP(+). The Proton acceptor role is filled by Tyr180. Catalysis depends on Lys184, which acts as the Lowers pKa of active site Tyr. A helical transmembrane segment spans residues 255–275 (DDVFTDFVGWMIMGMDLGLTA). The Lumenal portion of the chain corresponds to 276–279 (KKSR). The chain crosses the membrane as a helical span at residues 280–300 (FVPLQWIFGVLSNILVVPFYM). Topologically, residues 301-320 (VGCSWYIRKWFRENDGKKAN) are cytoplasmic.

It belongs to the short-chain dehydrogenases/reductases (SDR) family. In terms of assembly, dimer or tetramer.

It localises to the endoplasmic reticulum membrane. It catalyses the reaction sphinganine + NADP(+) = 3-oxosphinganine + NADPH + H(+). Its pathway is lipid metabolism; sphingolipid metabolism. Its function is as follows. Catalyzes the reduction of 3'-oxosphinganine (3-ketodihydrosphingosine/KDS) to sphinganine (dihydrosphingosine/DHS), the second step of de novo sphingolipid biosynthesis. The sequence is that of 3-ketodihydrosphingosine reductase TSC10 from Saccharomyces cerevisiae (strain ATCC 204508 / S288c) (Baker's yeast).